A 349-amino-acid polypeptide reads, in one-letter code: N-acetyltaurine hydrolase (349 aa).

Positions 26, 28, 169, 201, 230, and 298 each coordinate a divalent metal cation.

Belongs to the metallo-dependent hydrolases superfamily. Phosphotriesterase family. It depends on a divalent metal cation as a cofactor.

The protein localises to the cytoplasm. The protein resides in the cytosol. It carries out the reaction N-acetyltaurine + H2O = taurine + acetate. It catalyses the reaction N-propanoyltaurine + H2O = propanoate + taurine. The enzyme catalyses N-acetyl-L-methionine + H2O = L-methionine + acetate. The catalysed reaction is N-acetyl-L-isoleucine + H2O = L-isoleucine + acetate. It carries out the reaction N-acetyl-L-leucine + H2O = L-leucine + acetate. It catalyses the reaction N-acetyl-L-valine + H2O = L-valine + acetate. In terms of biological role, N-acetyltaurine hydrolase that catalyzes the hydrolysis of N-acetyltaurine into taurine and acetate. PTER also acts on other N-acetyl amino acids (Met, Ile, Leu, Val) and N-propionyltaurine, but at lower rates. The protein is N-acetyltaurine hydrolase (pter) of Tetraodon nigroviridis (Spotted green pufferfish).